Here is a 478-residue protein sequence, read N- to C-terminus: Cytochrome c lysine N-methyltransferase 1 (478 aa).

The SET domain maps to 32 to 284; it reads PCVSIERSQI…DRFEVFISYC (253 aa). The interval 199-299 is SET-like; that stretch reads TRAVVLRVYA…VHFKHTYGFF (101 aa).

It belongs to the class V-like SAM-binding methyltransferase superfamily.

It is found in the cytoplasm. Its subcellular location is the cytosol. The enzyme catalyses L-lysyl-[cytochrome c] + S-adenosyl-L-methionine = N(6)-methyl-L-lysyl-[cytochrome c] + S-adenosyl-L-homocysteine + H(+). Its function is as follows. Methyltransferase which mediates trimethylation of cytochrome c (CYC1). This Eremothecium gossypii (strain ATCC 10895 / CBS 109.51 / FGSC 9923 / NRRL Y-1056) (Yeast) protein is Cytochrome c lysine N-methyltransferase 1 (CTM1).